Consider the following 128-residue polypeptide: uncharacterized protein (128 aa).

This is an uncharacterized protein from Escherichia coli (Bacteriophage T6).